The primary structure comprises 195 residues: GTP cyclohydrolase 1 (195 aa).

Zn(2+) contacts are provided by C85, H88, and C157.

Belongs to the GTP cyclohydrolase I family. In terms of assembly, toroid-shaped homodecamer, composed of two pentamers of five dimers.

It catalyses the reaction GTP + H2O = 7,8-dihydroneopterin 3'-triphosphate + formate + H(+). Its pathway is cofactor biosynthesis; 7,8-dihydroneopterin triphosphate biosynthesis; 7,8-dihydroneopterin triphosphate from GTP: step 1/1. The sequence is that of GTP cyclohydrolase 1 from Clostridium acetobutylicum (strain ATCC 824 / DSM 792 / JCM 1419 / IAM 19013 / LMG 5710 / NBRC 13948 / NRRL B-527 / VKM B-1787 / 2291 / W).